Reading from the N-terminus, the 305-residue chain is GTPase Era (305 aa).

An Era-type G domain is found at 9–176 (KSGFISIIGR…LDTLPKYLPE (168 aa)). A G1 region spans residues 17–24 (GRPNVGKS). 17–24 (GRPNVGKS) contributes to the GTP binding site. Positions 43–47 (QTTRN) are G2. The G3 stretch occupies residues 64 to 67 (DTPG). Residues 64 to 68 (DTPGI) and 126 to 129 (NKID) contribute to the GTP site. Residues 126 to 129 (NKID) are G4. Residues 155–157 (ISA) are G5. Residues 207-286 (TREEIPHSIA…YLELWVKVQK (80 aa)) enclose the KH type-2 domain.

Belongs to the TRAFAC class TrmE-Era-EngA-EngB-Septin-like GTPase superfamily. Era GTPase family. In terms of assembly, monomer.

It localises to the cytoplasm. The protein resides in the cell membrane. In terms of biological role, an essential GTPase that binds both GDP and GTP, with rapid nucleotide exchange. Plays a role in 16S rRNA processing and 30S ribosomal subunit biogenesis and possibly also in cell cycle regulation and energy metabolism. The chain is GTPase Era from Lysinibacillus sphaericus (strain C3-41).